The chain runs to 484 residues: Tyramine receptor 1 (484 aa).

Residues 1 to 54 (MVRVELQAASLMNGSSAAEEPQDALVGGDACGGRRPPSVLGVRLAVPEWEVAVT) are Extracellular-facing. N-linked (GlcNAc...) asparagine glycosylation occurs at N13. Residues 55–77 (AVSLSLIILITIVGNVLVVLSVF) form a helical membrane-spanning segment. Residues 78–87 (TYKPLRIVQN) are Cytoplasmic-facing. A helical membrane pass occupies residues 88 to 109 (FFIVSLAVADLTVAVLVMPFNV). The Extracellular portion of the chain corresponds to 110-126 (AYSLIQRWVFGIVVCKM). C124 and C203 form a disulfide bridge. Residues 127–147 (WLTCDVLCCTASILNLCAIAL) form a helical membrane-spanning segment. The Cytoplasmic segment spans residues 148 to 167 (DRYWAITDPINYAQKRTLRR). Residues 168–190 (VLAMIAGVWLLSGVISSPPLIGW) form a helical membrane-spanning segment. Over 191–215 (NDWPMEFNDTTPCQLTEEQGYVIYS) the chain is Extracellular. An N-linked (GlcNAc...) asparagine glycan is attached at N198. A helical membrane pass occupies residues 216-237 (SLGSFFIPLFIMTIVYVEIFIA). The Cytoplasmic portion of the chain corresponds to 238–411 (TKRRLRERAK…LSKERRAART (174 aa)). Polar residues predominate over residues 253–280 (SAMKQQMAAQAVPSSVPSHDQESVSSET). Disordered stretches follow at residues 253 to 322 (SAMK…PAMV) and 358 to 383 (TTTA…PTPV). Basic residues predominate over residues 295–306 (EKRRKTKKKSKK). Residues 361-378 (AVTDSPRSRTASQKGSTA) are compositionally biased toward polar residues. The helical transmembrane segment at 412–433 (LGIIMGVFVVCWLPFFLMYVIV) threads the bilayer. Topologically, residues 434–448 (PFCNPSCKPSPKLVN) are extracellular. Residues 449-470 (FITWLGYINSALNPIIYTIFNL) traverse the membrane as a helical segment. Residues 471 to 484 (DFRRAFKKLLHFKT) are Cytoplasmic-facing.

Belongs to the G-protein coupled receptor 1 family. As to expression, present mainly in the central nervous system, especially in the supra- and subesophageal, thoracic and abdominal ganglia. Not found in the distal part of optic lobes.

The protein resides in the cell membrane. In terms of biological role, G-protein coupled receptor for tyramine, a known neurotransmitter and neuromodulator and direct precursor of octopamine. The rank order of potency for agonists of this receptor is tyramine &gt; naphazoline &gt; tolazoline &gt; DL-octopamine &gt; dopamine &gt; epinephrine &gt; 5-hydroxytryptamine. For antagonists, the rank order is yohimbine &gt; chlorpromazine &gt; mianserin &gt; phentolamine &gt; metoclopramide. This is Tyramine receptor 1 (GCR1) from Locusta migratoria (Migratory locust).